Consider the following 235-residue polypeptide: Elongation factor Tu, chloroplastic (235 aa).

One can recognise a tr-type G domain in the interval 1–125 (KNMITGAAQM…SVDSYIPTPI (125 aa)). 47 to 50 (NKED) lines the GTP pocket.

This sequence belongs to the TRAFAC class translation factor GTPase superfamily. Classic translation factor GTPase family. EF-Tu/EF-1A subfamily.

Its subcellular location is the plastid. It localises to the chloroplast. The enzyme catalyses GTP + H2O = GDP + phosphate + H(+). GTP hydrolase that promotes the GTP-dependent binding of aminoacyl-tRNA to the A-site of ribosomes during protein biosynthesis. This chain is Elongation factor Tu, chloroplastic (tufA), found in Costaria costata (Five-ribbed kelp).